A 264-amino-acid chain; its full sequence is Indole-3-glycerol phosphate synthase (264 aa).

Belongs to the TrpC family.

The enzyme catalyses 1-(2-carboxyphenylamino)-1-deoxy-D-ribulose 5-phosphate + H(+) = (1S,2R)-1-C-(indol-3-yl)glycerol 3-phosphate + CO2 + H2O. The protein operates within amino-acid biosynthesis; L-tryptophan biosynthesis; L-tryptophan from chorismate: step 4/5. This is Indole-3-glycerol phosphate synthase from Rhizorhabdus wittichii (strain DSM 6014 / CCUG 31198 / JCM 15750 / NBRC 105917 / EY 4224 / RW1) (Sphingomonas wittichii).